A 235-amino-acid chain; its full sequence is Serine protease SplA (235 aa).

Positions 1–35 are cleaved as a signal peptide; the sequence is MNKNVMVKGLTALDILTSLGCAENISDQPHSIAKA. Catalysis depends on charge relay system residues histidine 74, aspartate 113, and serine 189.

This sequence belongs to the peptidase S1B family.

It is found in the secreted. The sequence is that of Serine protease SplA (splA) from Staphylococcus aureus.